The chain runs to 473 residues: Cysteine--tRNA ligase (473 aa).

C28 provides a ligand contact to Zn(2+). The 'HIGH' region signature appears at 30–40 (PTVYNMPHIGN). Zn(2+)-binding residues include C213, H238, and E242. Residues 270 to 274 (KMSKS) carry the 'KMSKS' region motif. K273 serves as a coordination point for ATP.

It belongs to the class-I aminoacyl-tRNA synthetase family. Requires Zn(2+) as cofactor.

It localises to the cytoplasm. The catalysed reaction is tRNA(Cys) + L-cysteine + ATP = L-cysteinyl-tRNA(Cys) + AMP + diphosphate. The polypeptide is Cysteine--tRNA ligase (Methanosarcina mazei (strain ATCC BAA-159 / DSM 3647 / Goe1 / Go1 / JCM 11833 / OCM 88) (Methanosarcina frisia)).